The following is a 268-amino-acid chain: Helix-loop-helix protein 6 (268 aa).

A compositionally biased stretch (low complexity) spans 117–130 (QSQVQPQLPTQSQP). The interval 117-140 (QSQVQPQLPTQSQPKPSSKASLDT) is disordered. The span at 131-140 (KPSSKASLDT) shows a compositional bias: polar residues. One can recognise a bHLH domain in the interval 173–225 (SSVWKRNERERCRVRNVNDGYERLRKHLPVHFDEKRISKVDTLRLAIRYIKHL).

Expressed in the gland cells of the pharynx and weakly in the pharyngeal neuron.

It localises to the nucleus. Functionally, transcription factor that regulates the development of the g2 pharyngeal gland cells and pharyngeal gland function and thereby is required for feeding. Required for the expression of a number of genes in the pharyngeal gland, possibly by binding to the E box motif (5'-CANNTG-3') in the promoter region of these genes. Positively regulates the expression of genes encoding mucin-like proteins, which lubricate the pharyngeal tract to ensure efficient passage of the bacterial food source. Exhibits pharyngeal gland-specific positive autoregulation activity. This is Helix-loop-helix protein 6 (hlh-6) from Caenorhabditis elegans.